We begin with the raw amino-acid sequence, 327 residues long: Zinc transport protein ZntB (327 aa).

At 1-273 (MEAIKGSDVN…ARRTYTMSLM (273 aa)) the chain is on the cytoplasmic side. A helical membrane pass occupies residues 274–294 (AMVFLPSTFLTGLFGVNLGGI). At 295–300 (PGGGWR) the chain is on the periplasmic side. The helical transmembrane segment at 301–321 (FGFSLFCILLVVLIGGVTLWL) threads the bilayer. Residues 322 to 327 (HRSKWL) are Cytoplasmic-facing.

The protein belongs to the CorA metal ion transporter (MIT) (TC 1.A.35) family.

It localises to the cell inner membrane. It carries out the reaction Zn(2+)(out) + H(+)(out) = Zn(2+)(in) + H(+)(in). In terms of biological role, zinc transporter. Acts as a Zn(2+):proton symporter, which likely mediates zinc ion uptake. The chain is Zinc transport protein ZntB from Salmonella enteritidis PT4 (strain P125109).